Here is a 73-residue protein sequence, read N- to C-terminus: Tetrahydromethanopterin S-methyltransferase subunit F (73 aa).

Residues 52-72 (IGFAAGFLFSLLMVIVLPLLF) traverse the membrane as a helical segment.

This sequence belongs to the MtrF family. The complex is composed of 8 subunits; MtrA, MtrB, MtrC, MtrD, MtrE, MtrF, MtrG and MtrH.

Its subcellular location is the cell membrane. The enzyme catalyses 5-methyl-5,6,7,8-tetrahydromethanopterin + coenzyme M + 2 Na(+)(in) = 5,6,7,8-tetrahydromethanopterin + methyl-coenzyme M + 2 Na(+)(out). It functions in the pathway one-carbon metabolism; methanogenesis from CO(2); methyl-coenzyme M from 5,10-methylene-5,6,7,8-tetrahydromethanopterin: step 2/2. Functionally, part of a complex that catalyzes the formation of methyl-coenzyme M and tetrahydromethanopterin from coenzyme M and methyl-tetrahydromethanopterin. This is an energy-conserving, sodium-ion translocating step. The sequence is that of Tetrahydromethanopterin S-methyltransferase subunit F from Methanosarcina barkeri (strain Fusaro / DSM 804).